We begin with the raw amino-acid sequence, 658 residues long: UvrABC system protein B (658 aa).

The Helicase ATP-binding domain occupies glutamine 25 to arginine 416. Glycine 38–threonine 45 serves as a coordination point for ATP. The Beta-hairpin signature appears at histidine 91–isoleucine 114. One can recognise a Helicase C-terminal domain in the interval alanine 433–serine 607. A UVR domain is found at glutamate 623 to methionine 658.

This sequence belongs to the UvrB family. In terms of assembly, forms a heterotetramer with UvrA during the search for lesions. Interacts with UvrC in an incision complex.

It localises to the cytoplasm. In terms of biological role, the UvrABC repair system catalyzes the recognition and processing of DNA lesions. A damage recognition complex composed of 2 UvrA and 2 UvrB subunits scans DNA for abnormalities. Upon binding of the UvrA(2)B(2) complex to a putative damaged site, the DNA wraps around one UvrB monomer. DNA wrap is dependent on ATP binding by UvrB and probably causes local melting of the DNA helix, facilitating insertion of UvrB beta-hairpin between the DNA strands. Then UvrB probes one DNA strand for the presence of a lesion. If a lesion is found the UvrA subunits dissociate and the UvrB-DNA preincision complex is formed. This complex is subsequently bound by UvrC and the second UvrB is released. If no lesion is found, the DNA wraps around the other UvrB subunit that will check the other stand for damage. This chain is UvrABC system protein B, found in Helicobacter hepaticus (strain ATCC 51449 / 3B1).